Reading from the N-terminus, the 208-residue chain is LysM and putative peptidoglycan-binding domain-containing protein 2 (208 aa).

The segment at 1-54 (MAEFSPVLPPLRDDGGGGRYGQPLFPRSRSGSESDSELSQSLARTKTRSYGSTA) is disordered. Residues 27-42 (RSRSGSESDSELSQSL) show a composition bias toward low complexity. In terms of domain architecture, LysM spans 65 to 109 (IEHRVTDGETLQGIALKYGVTMEQIKRVNKLFSNDCIFLRNTLSI). 2 disordered regions span residues 122–169 (LSLE…EELS) and 187–208 (AARKLKEDGGREEDDTNSYQEI). Residues 129–140 (SEGNTPQESPCV) show a composition bias toward polar residues. The span at 147–156 (PSPPPEPSVP) shows a compositional bias: pro residues.

In Danio rerio (Zebrafish), this protein is LysM and putative peptidoglycan-binding domain-containing protein 2 (lysmd2).